The sequence spans 226 residues: Small ribosomal subunit protein uS3 (226 aa).

One can recognise a KH type-2 domain in the interval 39–107; it reads VRKFLNKELR…PAQINISEVR (69 aa).

It belongs to the universal ribosomal protein uS3 family. In terms of assembly, part of the 30S ribosomal subunit. Forms a tight complex with proteins S10 and S14.

Binds the lower part of the 30S subunit head. Binds mRNA in the 70S ribosome, positioning it for translation. The chain is Small ribosomal subunit protein uS3 from Idiomarina loihiensis (strain ATCC BAA-735 / DSM 15497 / L2-TR).